A 194-amino-acid polypeptide reads, in one-letter code: Small ribosomal subunit protein uS5 (194 aa).

The S5 DRBM domain maps to leucine 26–valine 89.

The protein belongs to the universal ribosomal protein uS5 family. As to quaternary structure, part of the 30S ribosomal subunit. Contacts proteins S4 and S8.

Its function is as follows. With S4 and S12 plays an important role in translational accuracy. Located at the back of the 30S subunit body where it stabilizes the conformation of the head with respect to the body. In Sulfurihydrogenibium sp. (strain YO3AOP1), this protein is Small ribosomal subunit protein uS5.